Consider the following 324-residue polypeptide: D-alanine--D-alanine ligase (324 aa).

The ATP-grasp domain occupies 121–321 (NQYLKAFGVR…IKDVMTDIIE (201 aa)). 149 to 204 (MEKIGLPCFIKPSLGGSSFGVTKVKTKEQIQPAIVKAFEEAQEVLVEAFMEGTELT) is an ATP binding site. Mg(2+) is bound by residues Asp-275, Glu-288, and Asn-290.

This sequence belongs to the D-alanine--D-alanine ligase family. Mg(2+) serves as cofactor. Mn(2+) is required as a cofactor.

The protein resides in the cytoplasm. It carries out the reaction 2 D-alanine + ATP = D-alanyl-D-alanine + ADP + phosphate + H(+). It functions in the pathway cell wall biogenesis; peptidoglycan biosynthesis. Functionally, cell wall formation. The protein is D-alanine--D-alanine ligase of Bacteroides thetaiotaomicron (strain ATCC 29148 / DSM 2079 / JCM 5827 / CCUG 10774 / NCTC 10582 / VPI-5482 / E50).